A 360-amino-acid chain; its full sequence is DNA replication and repair protein RecF (360 aa).

33–40 provides a ligand contact to ATP; it reads GENGSGKT.

Belongs to the RecF family.

It localises to the cytoplasm. The RecF protein is involved in DNA metabolism; it is required for DNA replication and normal SOS inducibility. RecF binds preferentially to single-stranded, linear DNA. It also seems to bind ATP. The polypeptide is DNA replication and repair protein RecF (Rickettsia canadensis (strain McKiel)).